A 406-amino-acid chain; its full sequence is Prisilkin-39 (406 aa).

A signal peptide spans 1-19 (MKGFLTLLLVCAILSTGYC). A run of 2 helical transmembrane segments spans residues 26-48 (ALTG…GAGA) and 58-80 (VGVG…YGGY). A 10 X 12 AA tandem repeat of G-G-Y-[SG]-G-Y-[GS]-Y-G-Y-P-[AT] region spans residues 78–197 (GGYSGYGYGY…YSGYSYGYPT (120 aa)).

Expression is confined to the prism and organic layers of the shell with no expression detected in the nacreous shell layer. Also expressed in the mantle edge, extrapallial fluid, hemolymph and, to a lesser extent, in the viscus (at protein level). In the mantle, localizes to inner epithelial cells of the outer fold and the outer epithelial cells of the middle fold at the bottom of the periostracal groove.

It localises to the membrane. Its function is as follows. Binds chitin and may serve as a framework constituent participating in shell formation. Inhibits aragonite precipitation and may regulate aragonite growth during shell layer formation. Does not affect calcite crystallization. The chain is Prisilkin-39 from Pinctada fucata (Akoya pearl oyster).